A 329-amino-acid polypeptide reads, in one-letter code: Biotin synthase (329 aa).

Positions 38–262 (NTIQVSTLLS…IMPHSYIRLS (225 aa)) constitute a Radical SAM core domain. Residues C53, C57, and C60 each coordinate [4Fe-4S] cluster. [2Fe-2S] cluster is bound by residues C97, C128, C188, and R260.

It belongs to the radical SAM superfamily. Biotin synthase family. Homodimer. [4Fe-4S] cluster serves as cofactor. It depends on [2Fe-2S] cluster as a cofactor.

The catalysed reaction is (4R,5S)-dethiobiotin + (sulfur carrier)-SH + 2 reduced [2Fe-2S]-[ferredoxin] + 2 S-adenosyl-L-methionine = (sulfur carrier)-H + biotin + 2 5'-deoxyadenosine + 2 L-methionine + 2 oxidized [2Fe-2S]-[ferredoxin]. It functions in the pathway cofactor biosynthesis; biotin biosynthesis; biotin from 7,8-diaminononanoate: step 2/2. In terms of biological role, catalyzes the conversion of dethiobiotin (DTB) to biotin by the insertion of a sulfur atom into dethiobiotin via a radical-based mechanism. The chain is Biotin synthase from Acinetobacter calcoaceticus.